The following is a 446-amino-acid chain: Argininosuccinate lyase (446 aa).

The protein belongs to the lyase 1 family. Argininosuccinate lyase subfamily.

The protein localises to the cytoplasm. It catalyses the reaction 2-(N(omega)-L-arginino)succinate = fumarate + L-arginine. Its pathway is amino-acid biosynthesis; L-arginine biosynthesis; L-arginine from L-ornithine and carbamoyl phosphate: step 3/3. In Bacteroides thetaiotaomicron (strain ATCC 29148 / DSM 2079 / JCM 5827 / CCUG 10774 / NCTC 10582 / VPI-5482 / E50), this protein is Argininosuccinate lyase.